The chain runs to 271 residues: Bifunctional protein FolD (271 aa).

Residues 154 to 156 (GRS), S181, and I222 contribute to the NADP(+) site.

This sequence belongs to the tetrahydrofolate dehydrogenase/cyclohydrolase family. As to quaternary structure, homodimer.

It carries out the reaction (6R)-5,10-methylene-5,6,7,8-tetrahydrofolate + NADP(+) = (6R)-5,10-methenyltetrahydrofolate + NADPH. The catalysed reaction is (6R)-5,10-methenyltetrahydrofolate + H2O = (6R)-10-formyltetrahydrofolate + H(+). Its pathway is one-carbon metabolism; tetrahydrofolate interconversion. Catalyzes the oxidation of 5,10-methylenetetrahydrofolate to 5,10-methenyltetrahydrofolate and then the hydrolysis of 5,10-methenyltetrahydrofolate to 10-formyltetrahydrofolate. This Thermotoga petrophila (strain ATCC BAA-488 / DSM 13995 / JCM 10881 / RKU-1) protein is Bifunctional protein FolD.